The primary structure comprises 295 residues: Defective in cullin neddylation protein AAR3 (295 aa).

One can recognise a DCUN1 domain in the interval 1-180 (MDSSPVSARF…LIDDFVEHMY (180 aa)). A Nuclear localization signal motif is present at residues 214-221 (YRRPHTGL). Positions 214–251 (YRRPHTGLRNIPGLKRKTSKKNDEEEEDEDEEVLETQN) are disordered. A compositionally biased stretch (acidic residues) spans 237–247 (EEEEDEDEEVL).

It localises to the nucleus. In terms of biological role, may contribute to the neddylation of all cullins by transferring NEDD8 from N-terminally acetylated NEDD8-conjugating E2s enzyme to different cullin C-terminal domain-RBX complexes; neddylation of cullins play an essential role in the regulation of SCF-type complexes activity. Regulates responses to the synthetic auxin 2,4-dichlorophenoxyacetic acid (2,4-D) in roots, probably by modulating the SCF(TIR1) ubiquitin E3 ligase complex-mediated proteolysis. The sequence is that of Defective in cullin neddylation protein AAR3 from Arabidopsis thaliana (Mouse-ear cress).